Consider the following 535-residue polypeptide: Succinate-semialdehyde dehydrogenase, mitochondrial (535 aa).

A mitochondrion-targeting transit peptide spans 1–47 (MATCIWLRSCGARRLGWTFPGCRLRPRAGGLVPASGPAPGPAQLRCY). Residue lysine 126 is modified to N6-acetyllysine; alternate. N6-succinyllysine; alternate is present on lysine 126. Lysine 135 and lysine 184 each carry N6-succinyllysine. NAD(+) contacts are provided by residues arginine 213 and 228 to 231 (KPAE). Arginine 213 is a substrate binding site. Lysine 265 carries the N6-acetyllysine; alternate modification. Lysine 265 carries the post-translational modification N6-succinyllysine; alternate. NAD(+) is bound at residue 284–289 (GSTTTG). The active-site Proton acceptor is the glutamate 306. Arginine 334 is a substrate binding site. Cysteine 340 acts as the Nucleophile in catalysis. Cysteine 340 and cysteine 342 are disulfide-bonded. The residue at position 365 (lysine 365) is an N6-acetyllysine. Lysine 402 carries the N6-succinyllysine modification. N6-acetyllysine is present on lysine 411. Serine 498 lines the substrate pocket. Residue serine 499 is modified to Phosphoserine.

This sequence belongs to the aldehyde dehydrogenase family. As to quaternary structure, homotetramer.

It localises to the mitochondrion. The catalysed reaction is succinate semialdehyde + NAD(+) + H2O = succinate + NADH + 2 H(+). The protein operates within amino-acid degradation; 4-aminobutanoate degradation. Redox-regulated. Inhibited under oxydizing conditions. Catalyzes one step in the degradation of the inhibitory neurotransmitter gamma-aminobutyric acid (GABA). The sequence is that of Succinate-semialdehyde dehydrogenase, mitochondrial (ALDH5A1) from Pan paniscus (Pygmy chimpanzee).